The following is a 778-amino-acid chain: Degenerin deg-1 (778 aa).

Residues 1–82 (MSNHHSKTKK…IARNSFSKLM (82 aa)) are Cytoplasmic-facing. Residues 83–103 (WGLIIFSFLLMFAYQASKLIF) form a helical membrane-spanning segment. Over 104–711 (KFSAHEKITD…LVNLIADFGG (608 aa)) the chain is Extracellular. Positions 154-165 (NAKTHSKSEGEK) are enriched in basic and acidic residues. Disordered regions lie at residues 154-180 (NAKTHSKSEGEKKKPKVSRKQHSDASQ) and 201-220 (SNKTLQSQNKSGRRRSQRSI). Asn-202, Asn-209, Asn-272, and Asn-342 each carry an N-linked (GlcNAc...) asparagine glycan. The segment covering 346-369 (TSTTTTTTTTPPPTTTSTTTTTTT) has biased composition (low complexity). The interval 346-380 (TSTTTTTTTTPPPTTTSTTTTTTTTPPPTTTARPN) is disordered. N-linked (GlcNAc...) asparagine glycans are attached at residues Asn-473, Asn-492, and Asn-606. Residues 712-732 (HLGLWLGFSVITVMEVCVLLV) form a helical membrane-spanning segment. The Cytoplasmic segment spans residues 733–778 (DMISLFFKSRHEEKLLRQSTKRKDVPEDKRQITVGSGRKSDAFVSI).

It belongs to the amiloride-sensitive sodium channel (TC 1.A.6) family.

Its subcellular location is the membrane. Its function is as follows. Probable sodium channel subunit. Required by a subset of neurons. This chain is Degenerin deg-1, found in Caenorhabditis elegans.